The chain runs to 369 residues: UDP-N-acetylglucosamine--N-acetylmuramyl-(pentapeptide) pyrophosphoryl-undecaprenol N-acetylglucosamine transferase (369 aa).

UDP-N-acetyl-alpha-D-glucosamine is bound by residues 10 to 12 (TGG), asparagine 124, arginine 166, serine 196, and glutamine 300.

Belongs to the glycosyltransferase 28 family. MurG subfamily.

It localises to the cell membrane. The catalysed reaction is di-trans,octa-cis-undecaprenyl diphospho-N-acetyl-alpha-D-muramoyl-L-alanyl-D-glutamyl-meso-2,6-diaminopimeloyl-D-alanyl-D-alanine + UDP-N-acetyl-alpha-D-glucosamine = di-trans,octa-cis-undecaprenyl diphospho-[N-acetyl-alpha-D-glucosaminyl-(1-&gt;4)]-N-acetyl-alpha-D-muramoyl-L-alanyl-D-glutamyl-meso-2,6-diaminopimeloyl-D-alanyl-D-alanine + UDP + H(+). Its pathway is cell wall biogenesis; peptidoglycan biosynthesis. Cell wall formation. Catalyzes the transfer of a GlcNAc subunit on undecaprenyl-pyrophosphoryl-MurNAc-pentapeptide (lipid intermediate I) to form undecaprenyl-pyrophosphoryl-MurNAc-(pentapeptide)GlcNAc (lipid intermediate II). The protein is UDP-N-acetylglucosamine--N-acetylmuramyl-(pentapeptide) pyrophosphoryl-undecaprenol N-acetylglucosamine transferase of Desulfitobacterium hafniense (strain Y51).